A 651-amino-acid polypeptide reads, in one-letter code: ATP synthase F(1) complex catalytic subunit beta, mitochondrial (651 aa).

The transit peptide at 1-30 directs the protein to the mitochondrion; that stretch reads MFVARRLSKNITQISKTAVKTSVRAVPVRG. The ADP site is built by Gly259, Val260, Gly261, Lys262, Thr263, and Val264. Gly259 serves as a coordination point for ATP. Phosphate contacts are provided by Gly259, Val260, Gly261, Lys262, and Thr263. Residues Gly261, Lys262, Thr263, and Val264 each contribute to the ATP site. Thr263 serves as a coordination point for Mg(2+). Glu288 is a Mg(2+) binding site. Arg289 contacts ATP.

The protein belongs to the ATPase alpha/beta chains family. As to quaternary structure, homotrimer. Component of the ATP synthase complex composed at least of ATP5F1A/subunit alpha, ATP5F1B/subunit beta, ATP5MC1/subunit c (homooctomer), MT-ATP6/subunit a, MT-ATP8/subunit 8, ATP5ME/subunit e, ATP5MF/subunit f, ATP5MG/subunit g, ATP5MK/subunit k, ATP5MJ/subunit j, ATP5F1C/subunit gamma, ATP5F1D/subunit delta, ATP5F1E/subunit epsilon, ATP5PF/subunit F6, ATP5PB/subunit b, ATP5PD/subunit d, ATP5PO/subunit OSCP. ATP synthase complex consists of a soluble F(1) head domain (subunits alpha(3) and beta(3)) - the catalytic core - and a membrane F(0) domain - the membrane proton channel (subunits c, a, 8, e, f, g, k and j). These two domains are linked by a central stalk (subunits gamma, delta, and epsilon) rotating inside the F1 region and a stationary peripheral stalk (subunits F6, b, d, and OSCP).

It localises to the mitochondrion inner membrane. The catalysed reaction is ATP + H2O + 4 H(+)(in) = ADP + phosphate + 5 H(+)(out). Functionally, catalytic subunit beta, of the mitochondrial membrane ATP synthase complex (F(1)F(0) ATP synthase or Complex V) that produces ATP from ADP in the presence of a proton gradient across the membrane which is generated by electron transport complexes of the respiratory chain. ATP synthase complex consist of a soluble F(1) head domain - the catalytic core - and a membrane F(1) domain - the membrane proton channel. These two domains are linked by a central stalk rotating inside the F(1) region and a stationary peripheral stalk. During catalysis, ATP synthesis in the catalytic domain of F(1) is coupled via a rotary mechanism of the central stalk subunits to proton translocation. In vivo, can only synthesize ATP although its ATP hydrolase activity can be activated artificially in vitro. With the subunit alpha (ATP5F1A), forms the catalytic core in the F(1) domain. The polypeptide is ATP synthase F(1) complex catalytic subunit beta, mitochondrial (Dictyostelium discoideum (Social amoeba)).